The following is an 892-amino-acid chain: Translation initiation factor IF-2 (892 aa).

The interval 88-305 (KKRTFVKRDP…SLQQGFQKPA (218 aa)) is disordered. Basic and acidic residues-rich tracts occupy residues 93–159 (VKRD…KDKV) and 166–216 (DMTK…EENK). Over residues 254–269 (GRGRNAKAARPAKKGK) the composition is skewed to basic residues. The span at 270-282 (HAESKADREEARA) shows a compositional bias: basic and acidic residues. The tr-type G domain maps to 391-560 (PRAPVVTIMG…LLQAEVLELK (170 aa)). Residues 400–407 (GHVDHGKT) form a G1 region. 400–407 (GHVDHGKT) contributes to the GTP binding site. Positions 425 to 429 (GITQH) are G2. A G3 region spans residues 446–449 (DTPG). GTP is bound by residues 446–450 (DTPGH) and 500–503 (NKID). Positions 500 to 503 (NKID) are G4. Residues 536 to 538 (SAK) are G5.

It belongs to the TRAFAC class translation factor GTPase superfamily. Classic translation factor GTPase family. IF-2 subfamily.

It is found in the cytoplasm. Its function is as follows. One of the essential components for the initiation of protein synthesis. Protects formylmethionyl-tRNA from spontaneous hydrolysis and promotes its binding to the 30S ribosomal subunits. Also involved in the hydrolysis of GTP during the formation of the 70S ribosomal complex. The protein is Translation initiation factor IF-2 of Salmonella agona (strain SL483).